A 4010-amino-acid polypeptide reads, in one-letter code: MGVLKAWLGVALALAEFAVLPNCEGACLYQGSFLADATIWKPDSCQNCRCHGDIVICKPVVCKNPRCAFEKGEVLWIAPNQCCPQCAPRTPGSCHHEGKIHEHGTEWASAPCTVCSCTHGEVRCSHQQCTPLSCGPQELEFLAEGRCCPICVGTGKPCSYDGHVFQDGEDWQLSRCAKCVCRNGLTQCFAAQCQPLFCNQDEIVVRVPGKCCSQCSARSCSTAGQVYEHGEQWKEDACTLCMCDQGQVRCHKQVCPPLRCAKGQGRARHHGQCCEECATPDRSCSSGGVLRYQDEMWKGSACEFCMCDQGQVTCQTGECAKVACALGEELVHLEGKCCPECISRNGYCIYEQKAETMSSSAREIKHVPDGEKWEEGPCKLCECREAQVTCYEPSCPPCPVATLALVVKGQCCPDCTPVHCHPDCLTCSHSPDHCDLCQDPTKLLQNGRCVHSCGLGFYQAGSLCLACQPQCSTCTNGLECSSCLPPLLMQQGQCVSTCGDGFYQDHHSCAVCHESCAGCWGPTEKHCMACRDPLQVLRDSSCENTCGNGFYNRQGTCVACDQSCKSCGPSSPRCLSCAEKTILHDGKCISECPHGYYADSTGSCKVCHSSCASCSGPTAAHCIACIHPQTLRQGHCLPSCGEGFYPDHGICEACHASCHTCVGPQPSHCTQCKKPEAGLLVEQHSGENVPYGKCVSRCGTHFYLESTGLCEVCHPSCLTCEGKSPHNCTGCESTHALLAGCCVSQCPETHFNLEGTCTECHPSCRQCHGPLESDCVSCHPHLTLTSGHCKTSCKEEQFLNLVGYCADCHPLCQHCVANLQDTGSICLKCQHARHLLLGDHCVPECPPGHYKERGTCKTCHSSCRSCQNGGPFSCSSCDTGLVLTHIGTCSTACFPGHYLDDNQVCQPCNRHCRSCDSQGSCTSCRDPSKVLLFGECQYESCTPQYYLDIATKTCKECDWSCNACTGPLRTDCLQCMDGYVLQDGVCVEQCSPQHYRDSGSCKRCDSHCVECQGPHECTRCEEPFLLFQAQCVQECGKGYFADHAKHRCIACPQGCLRCSHKDRCHLCDHSFFLKSGLCMPTCVPGFSGHSSNENCTDKMYTPSLHVNGSLTLGIGSMKPLDFSLLNIQHQDGRVEDLLFHVVSTPTNGQLLLSRNGKEVQLEKAGHFSWKDVNEKKVRFVHSKEKLRKGYFSLKISDQQFFSEPQLINIQAFSTQAPYVLRNEVLHVSKGERATITTQLLDIRDDDNPQDVVVNVLDPPLHGQLLQMPPAPAASIYQFHLDELSRGLLLYAHDGSDSTSDIIVFQANDGHSFQNILFHVKNIPKNDRALRLVTNSMVWVPEGGMLKITNRILKAQAPGVRADDIIYKITHSRPQFGEVVLLMNLPADSPAGPAEEGHHLPDGRMATPISTFTQQDIDDGVVWYRHLGAPTQSDSFRFQVSSATSAQEHLESHMFNIAILPQAPEAPKLSLGTSLHMTAREDGLSVIQPQSLSFVKAESPSGKIIYNITVPLHPNQGIIEHRDRPHSPIQYFTQEDINQGQIMYRPPVAPPHLQEIMAFSFAGLPESVKFYFTVSDGQHTSPEMALTIHLLHSDLQPPAFQVKAPLLEVSPGGRTSLGLQLLVRDAQVVPEELFFQLQKSPQHGMLVKYTAKSSVTMAAGDTFTYDEVERNVLQYVHDGSSAWEDSLEISVTDGLTVTTSEVKVEVSPSENRGPRLAPGSSLSMTVASQHTAIITRSHLAYVDDSSSDPEIWIRLSSLPLYGVLFRSSGPDMDELSGDSNFTMEDINKKNIRYSAVFETDGHSVTDGFHFSVSDMDGNHVDNQVFTITVTPAENPPHIIAFADLITVDEGGRAPLSLHHFFATEDQDNLQDDAVIKLSALPKYGCIENTGTGDRFGPGANSELEASFPIQDVLENYIYYFQSVHESIEPTHDVFSFYVSDGSGRSEIHSINITIERKNDEPPRMTLRPLGVRLSSGVAISNSSLSLQDLDTPDNELIFVLMKKPDHGHLLRRSTASDPLENGTVLDQGSSFTYQDVLAGLVGYLPGDIYMAVDEFRFSLTDGLHVDTGRMEIYIELPSTNIPHLAINRGLQLSAGSVARITEQHLKATDTDSEAGQVVYIMKEDPGAGRLLMAKADNLEQISVRGPIRSFTQADVSQGQIEYSHGPGEPGGSFAFKFDVVDGEGNKLADQSFSIGVLEDKSPPVVITNRGLVLDENSVEKITTAQLSATDQDSKPTELIYRITTQPQLGHLEHVASPGIQISSFTQADLASRNVQYVRSSGTGKQSDAFSFVLSDGLHEVTQTFPITIHPVDDARPLVQNRGMRVQEGVRKTITEFELKAVDVDTEAESITFTIVQPPRHGTIERTARGQRFHQTSSFTMEDIYQNRVSYSHDGSNSLKDRFTFTVSDGTNPFFIIEEGGEEIMTAAPQQFHVDILPVDDGTPRIVTNLGLQWLEYMDGKATNLITKKELLTVDPDTEDSQLIYEVTTGPMHGYLENKLQPGRAAATFTQEHVNLGLIRYVLYEEKIQKVMDSFQFLVKDSKPNVVSDNVFHIQWSLISFKYTSYNVSEKAGSVSVTVQRTGNLNQYAIVLCRTEQGTASSSSHPGQQDYMEYAGQVQFDEGEGTKSCTVIINDDDVFENIESFTVGLSMPAYALLGEFTQAKVVINDTEDEPTLEFDKKTYRVNESAGFLFAPIKRQGDSSSTVSAVCYTVPKSAMGSSLYALESGSDFKSRGRSAESRVIFGPGVTVSTCDVMVIDDSEYEEEEEFEIALADASNNARIGRQAVAKVLISGPNDASTVSLGNTAFTISEDAGTVKIPVIRHGTDLSTFTSVWCATRPSDPASATPGVDYVPSSRKVEFGPGITEQYCTLTILDDTQYPVIEGLETFVVFLSSAQGAELTKPSQAVIAINDTFQDVPSMQFSKDLLLVKEKEGVLHIPIIRSGDLSYESSVRCYTQGHSAQVMEDFEERRNADSSRITFLKGQKTKNCTVYIHDDSMFEPEEQFRVYLGHPLGNHWSGARIGKNSVATVTISNDEDAPTIEFEEAAYQVREPAGPEAIAVLSIKVIRRGDQNRTSKIRCSTRDGSAQSGVDYYPKSRVLKFSPGVDHIFFKVEILSNEDREWHESFSLVLGPDDLVEAVLGDVTTATVTILDQEAAGSLILPAPPIVVTLADYDHVEELAKEGVKKAPSPGYPLVCVTPCDPRYPRYAVMKERCSEAGINQTSVQFSWEVAAPTDGNGARSPFETITDNTPFTSVNHKVLDSIYFSRRFHVRCVAKAVDKVGHVGTPLRSNVVTIGTDSAICHTPVVAGTARGFQAQSFIATLKYLDVKHKEHPNRIHISVQIPHQDGMLPLISTMPLHNLHFLLSESIYRHQHVCSNLVTAQDLRGLAEAGFLNDAGFHSTALGPGYDRPFQFDSSVREPKTIQLYRHLNLKSCVWTFDAYYDMTELIDVCGGSVTADFQVRDSAQSFLTVHVPLYVSYIYVTAPRGWASLEHHTEMEFSFFYDTVLWRTGIQTDSVLSARLQIIRIYIREDGRLVIEFKTHAKFRGQFVIEHHTLPDVKSFILTPDHLGGIQFDLQLLWSAQTFDSPHQLWRATSSYNRKDYSGEYTIYLIPCTVQPTQPWVDPGEKALACTAHAPERFLIPIAFQQTNRPVPVVYSLNTEFQLCNNEKVFLMDPNTSDMSLAEMDYKGAFSKGQILYGRVLWNPEQNLHSAYKLQLEKVYLCTGKDGYVPFFDPTGTIYNEGPQYGCIQPNKHLKHRFLLLDRSQPEVTDKYFHDVPFEAHFASELPDFQVVSSMPGVDGFTLKVDALYKVEAGHQWYLQVIYIIGPDSTSRPRVQRSLTVSLRRHQRDLVDPSGWLSLDDSLIYDNEGDQVKNGTNMKSLNLEMQEPVIAASLSQTGASIGSALAAIMLLLLLFLVACFVTRKCQKQKKKQPPEDTLEEYPLNTKVDVAKRNADKVEKNANRQYCTVRNVNILSDNEGYYTFKGAKVKKLNLEVRVHNNLQDGTEV.

A signal peptide spans 1–25 (MGVLKAWLGVALALAEFAVLPNCEG). VWFC domains are found at residues 26 to 87 (ACLY…PQCA), 92 to 152 (GSCH…PICV), 156 to 216 (KPCS…SQCS), 218 to 278 (RSCS…EECA), and 282 to 342 (RSCS…PECI). Residues 26 to 3903 (ACLYQGSFLA…AASLSQTGAS (3878 aa)) lie on the Extracellular side of the membrane. Position 343 is a phosphoserine (serine 343). Residues 358–416 (SSSAREIKHVPDGEKWEEGPCKLCECREAQVTCYEPSCPPCPVATLALVVKGQCCPDCT) enclose the VWFC 6 domain. FU repeat units lie at residues 408–459 (KGQC…GFYQ), 461–504 (GSLC…GFYQ), 506–552 (HHSC…GFYN), 554–598 (QGTC…GYYA), 601–646 (TGSC…GFYP), 648–704 (HGIC…HFYL), 707–752 (TGLC…THFN), 754–799 (EGTC…EQFL), 802–851 (VGYC…GHYK), 853–899 (RGTC…GHYL), 902–947 (NQVC…QYYL), 951–996 (TKTC…QHYR), 998–1041 (SGSC…GYFA), and 1045–1088 (KHRC…GFSG). An N-linked (GlcNAc...) asparagine glycan is attached at asparagine 727. N-linked (GlcNAc...) asparagine glycans are attached at residues asparagine 1094 and asparagine 1107. CSPG repeat units lie at residues 1101–1196 (TPSL…LKIS), 1216–1307 (APYV…FQAN), 1328–1440 (ALRL…FQVS), 1465–1561 (APKL…FSFA), 1597–1691 (PAFQ…ISVT), 1712–1812 (GPRL…FSVS), and 1834–1938 (PPHI…FYVS). Asparagine 1506 carries an N-linked (GlcNAc...) asparagine glycan. The N-linked (GlcNAc...) asparagine glycan is linked to asparagine 1779. Residues asparagine 1950 and asparagine 1980 are each glycosylated (N-linked (GlcNAc...) asparagine). CSPG repeat units follow at residues 1959-2059 (EPPR…FSLT), 2080-2179 (IPHL…FDVV), 2201-2293 (PPVV…FVLS), 2313-2406 (ARPL…FTVS), and 2441-2538 (TPRI…FLVK). Calx-beta domains are found at residues 2545-2648 (VSDN…VGLS), 2661-2772 (AKVV…IALA), 2786-2892 (AKVL…VFLS), 2907-3009 (IAIN…VYLG), and 3027-3131 (ATVT…LVLG). N-linked (GlcNAc...) asparagine glycans are attached at residues asparagine 2565, asparagine 2666, and asparagine 2684. N-linked (GlcNAc...) asparagine glycosylation is found at asparagine 2910, asparagine 2987, asparagine 3072, asparagine 3220, asparagine 3678, and asparagine 3877. A helical membrane pass occupies residues 3904–3924 (IGSALAAIMLLLLLFLVACFV). Residues 3925–4010 (TRKCQKQKKK…HNNLQDGTEV (86 aa)) lie on the Cytoplasmic side of the membrane.

It belongs to the FRAS1 family.

Its subcellular location is the cell membrane. Its function is as follows. Involved in extracellular matrix organization. Required for the regulation of epidermal-basement membrane adhesion responsible for proper organogenesis during embryonic development. Involved in brain organization and function. The polypeptide is Extracellular matrix organizing protein FRAS1 (Mus musculus (Mouse)).